A 285-amino-acid polypeptide reads, in one-letter code: Cytochrome P450 monooxygenase eupD (285 aa).

The first 19 residues, 1-19 (MSIAGLVTTLPWLMNMLRA), serve as a signal peptide directing secretion. Cys229 contacts heme.

This sequence belongs to the cytochrome P450 family. Requires heme as cofactor.

It functions in the pathway secondary metabolite biosynthesis; terpenoid biosynthesis. In terms of biological role, cytochrome P450 monooxygenase; part of the gene cluster that mediates the biosynthesis of eupenifeldin, a bistropolone meroterpenoid that acts as an antitumor agent. The first step of eupenifeldin biosynthesis is the biosynthesis of 3-methylorcinaldehyde performed by the non-reducing polyketide synthase eupA. Oxidative dearomatization of 3-methylorcinaldehyde likely catalyzed by the FAD-dependent monooxygenase eupB is followed by oxidative ring expansion by the 2-oxoglutarate-dependent dioxygenase eupC to provide the first tropolone metabolite, tropolone stipitaldehyde. In parallel, generation of sesquiterpene alpha-humulene from farnesylpyrophosphate (FPP) is catalyzed by the terpene cyclase eupE. The cytochrome P450 monooxygenase eupD then hydroxylates humulene to humulenol. The putative Diels-Alderase eupF probably catalyzes the formation of the tropolone-humulene skeleton by linking humulenol and the polyketide moiety. The short-chain dehydrogenase/reductase eupG and the flavin-dependent monooxygenase eupH are also essential for eupenifeldin biosynthesis and are likely the additional decorating enzymes of the tropolone-humulene skeleton to produce final eupenifeldin or derivatives. This is Cytochrome P450 monooxygenase eupD from Phoma sp.